The chain runs to 201 residues: ATP-dependent Clp protease proteolytic subunit (201 aa).

Serine 101 functions as the Nucleophile in the catalytic mechanism. The active site involves histidine 126.

The protein belongs to the peptidase S14 family. As to quaternary structure, component of the chloroplastic Clp protease core complex.

It localises to the plastid. It is found in the chloroplast stroma. The enzyme catalyses Hydrolysis of proteins to small peptides in the presence of ATP and magnesium. alpha-casein is the usual test substrate. In the absence of ATP, only oligopeptides shorter than five residues are hydrolyzed (such as succinyl-Leu-Tyr-|-NHMec, and Leu-Tyr-Leu-|-Tyr-Trp, in which cleavage of the -Tyr-|-Leu- and -Tyr-|-Trp bonds also occurs).. Cleaves peptides in various proteins in a process that requires ATP hydrolysis. Has a chymotrypsin-like activity. Plays a major role in the degradation of misfolded proteins. The chain is ATP-dependent Clp protease proteolytic subunit from Chlorella vulgaris (Green alga).